The sequence spans 222 residues: UPF0502 protein SO_1867 (222 aa).

Polar residues predominate over residues 169–193 (EQVSATSLSADSPSADSNSLNAQDR). Residues 169–195 (EQVSATSLSADSPSADSNSLNAQDRQQ) are disordered.

This sequence belongs to the UPF0502 family.

This Shewanella oneidensis (strain ATCC 700550 / JCM 31522 / CIP 106686 / LMG 19005 / NCIMB 14063 / MR-1) protein is UPF0502 protein SO_1867.